The following is a 198-amino-acid chain: Glycerol-3-phosphate acyltransferase (198 aa).

Transmembrane regions (helical) follow at residues 1-21 (MNLL…GYLA), 53-73 (IIVF…AKYL), 79-99 (WQVA…WLNW), 111-131 (IFLG…IIMI), 136-156 (IVSL…FLSF), and 158-178 (GSNI…LVIW).

The protein belongs to the PlsY family. In terms of assembly, probably interacts with PlsX.

The protein resides in the cell inner membrane. The enzyme catalyses an acyl phosphate + sn-glycerol 3-phosphate = a 1-acyl-sn-glycero-3-phosphate + phosphate. Its pathway is lipid metabolism; phospholipid metabolism. Functionally, catalyzes the transfer of an acyl group from acyl-phosphate (acyl-PO(4)) to glycerol-3-phosphate (G3P) to form lysophosphatidic acid (LPA). This enzyme utilizes acyl-phosphate as fatty acyl donor, but not acyl-CoA or acyl-ACP. This is Glycerol-3-phosphate acyltransferase from Prochlorococcus marinus (strain NATL1A).